The following is a 94-amino-acid chain: Small ribosomal subunit protein uS19 (94 aa).

This sequence belongs to the universal ribosomal protein uS19 family.

Its function is as follows. Protein S19 forms a complex with S13 that binds strongly to the 16S ribosomal RNA. In Syntrophomonas wolfei subsp. wolfei (strain DSM 2245B / Goettingen), this protein is Small ribosomal subunit protein uS19.